Reading from the N-terminus, the 932-residue chain is Protocadherin gamma-A9 (932 aa).

A signal peptide spans 1 to 28 (MAAPTKCQLRGRLVLLCSLLGMLWEARA). Cadherin domains lie at 29-133 (SQIR…APKF), 134-242 (QAES…APVF), 243-347 (AQRI…RPEV), 348-452 (TITS…PPAF), 453-562 (SQAS…APEI), and 570-683 (DGST…IPAD). At 29–692 (SQIRYSVPEE…DLEASDLTLY (664 aa)) the chain is on the extracellular side. N-linked (GlcNAc...) asparagine glycosylation is found at Asn47 and Asn127. Asn389, Asn419, and Asn545 each carry an N-linked (GlcNAc...) asparagine glycan. A helical membrane pass occupies residues 693 to 713 (LVVAVAVVSCVFLTFVITLLA). Residues 714–932 (LRLRHWHSSH…KKKSGKKEKK (219 aa)) lie on the Cytoplasmic side of the membrane. 2 disordered regions span residues 803 to 841 (DTPL…WPNN) and 902 to 932 (ATLT…KEKK). Residues 816-841 (WRFSQAQRPGTSGSQNGDDTGTWPNN) are compositionally biased toward polar residues. Basic residues predominate over residues 922–932 (NKKKSGKKEKK).

It is found in the cell membrane. Its function is as follows. Potential calcium-dependent cell-adhesion protein. May be involved in the establishment and maintenance of specific neuronal connections in the brain. This chain is Protocadherin gamma-A9 (PCDHGA9), found in Homo sapiens (Human).